The primary structure comprises 278 residues: Potassium/proton antiporter CemA (278 aa).

A run of 4 helical transmembrane segments spans residues 60-80 (YLVL…SLVF), 163-183 (ILAF…IAVL), 201-221 (FLII…GWEV), and 239-259 (IFLF…YWIF).

This sequence belongs to the CemA family.

Its subcellular location is the plastid. The protein resides in the chloroplast inner membrane. It carries out the reaction K(+)(in) + H(+)(out) = K(+)(out) + H(+)(in). Contributes to K(+)/H(+) antiport activity by supporting proton efflux to control proton extrusion and homeostasis in chloroplasts in a light-dependent manner to modulate photosynthesis. Prevents excessive induction of non-photochemical quenching (NPQ) under continuous-light conditions. Indirectly promotes efficient inorganic carbon uptake into chloroplasts. The sequence is that of Potassium/proton antiporter CemA from Guillardia theta (Cryptophyte).